The following is a 334-amino-acid chain: Mevalonate kinase (334 aa).

110-120 (PVGAGLGSSAA) is an ATP binding site. Catalysis depends on Asp161, which acts as the Proton acceptor.

The protein belongs to the GHMP kinase family. Mevalonate kinase subfamily. Homodimer. Mg(2+) is required as a cofactor.

The protein localises to the cytoplasm. It catalyses the reaction (R)-mevalonate + ATP = (R)-5-phosphomevalonate + ADP + H(+). It functions in the pathway isoprenoid biosynthesis; isopentenyl diphosphate biosynthesis via mevalonate pathway; isopentenyl diphosphate from (R)-mevalonate: step 1/3. In terms of biological role, catalyzes the phosphorylation of (R)-mevalonate (MVA) to (R)-mevalonate 5-phosphate (MVAP). Functions in the mevalonate (MVA) pathway leading to isopentenyl diphosphate (IPP), a key precursor for the biosynthesis of isoprenoid compounds such as archaeal membrane lipids. The polypeptide is Mevalonate kinase (Thermococcus onnurineus (strain NA1)).